Consider the following 469-residue polypeptide: MWKEKVLEYENQMIEDLKGLLSIESIRDDSKATADAPVGPGPREALDYMYNLGKRDGFSTHDVDHIAGRIEAGKGEDVLGILCHVDVVPAGDGWDSNPFQPVVTDNAIIARGTLDDKGPTIAAYYAVKILNEMKVDWKKRIHIIIGTDEESDWKCTDRYFKTEEMPALGFAPDAEFPAIHGEKGITTFDLVQNEVTEDTDEPDYELLKFESGQRYNMVPDYAKAEVLVKENMTDVIQNFENFLQQNQLQGESTVDSGILILTIEGKAVHGMDPSLGVNAGLFLLKFLASLNLNKSAKDFVEFNERYLFESHFGEKMGMKFHTDIMGDVTTNIGVISYDKEKAGRYGINLRYPEGFKFEDAIDRFRSEINELGFNLELGKVQKPHYVDKNDPFVKTLVNAYRNQTGDMTEPYTIGGGTYARNLDKGVAFGAMFADSEDLMHQKNEYITKKQLINATSIYLEAIYALCVED.

Residue His84 coordinates Zn(2+). Asp86 is a catalytic residue. Asp115 is a Zn(2+) binding site. Glu149 functions as the Proton acceptor in the catalytic mechanism. Residues Glu150, Asp173, and His440 each contribute to the Zn(2+) site.

It belongs to the peptidase M20A family. It depends on Zn(2+) as a cofactor.

This chain is Putative dipeptidase SE_1424, found in Staphylococcus epidermidis (strain ATCC 12228 / FDA PCI 1200).